We begin with the raw amino-acid sequence, 104 residues long: Protamine-2 (104 aa).

Phosphoserine occurs at positions 8 and 10. Residues 23 to 104 are disordered; it reads WQEQGRNGQE…SRRRRRCRRY (82 aa). Positions 24–35 are enriched in low complexity; the sequence is QEQGRNGQEEQG. Residue Ser37 is modified to Phosphoserine. Residues 54–104 show a composition bias toward basic residues; that stretch reads YRRRRCSRRRRYRIHRRRSRSCRRRRRRSCRYRRRPRRGCRSRRRRRCRRY.

The protein belongs to the protamine P2 family. Interacts with TDRP. Post-translationally, proteolytic processing into mature chains is required for histone eviction during spermatogenesis. Transition proteins (TNP1 and TNP2) are required for processing. In terms of tissue distribution, testis.

The protein resides in the nucleus. The protein localises to the chromosome. Its function is as follows. Protamines substitute for histones in the chromatin of sperm during the haploid phase of spermatogenesis. They compact sperm DNA into a highly condensed, stable and inactive complex. This is Protamine-2 (PRM2) from Callithrix jacchus (White-tufted-ear marmoset).